The following is a 139-amino-acid chain: Protein archease (139 aa).

Positions 12, 138, and 139 each coordinate Ca(2+).

The protein belongs to the archease family.

Activates the tRNA-splicing ligase complex by facilitating the enzymatic turnover of catalytic subunit RtcB. Acts by promoting the guanylylation of RtcB, a key intermediate step in tRNA ligation. Can also alter the NTP specificity of RtcB such that ATP, dGTP or ITP is used efficiently. The protein is Protein archease of Saccharolobus islandicus (strain Y.G.57.14 / Yellowstone #1) (Sulfolobus islandicus).